Consider the following 191-residue polypeptide: Ribonuclease HII (191 aa).

Residues 16-191 (INLIGIDEAG…KLHRKSFKLL (176 aa)) enclose the RNase H type-2 domain. A divalent metal cation contacts are provided by Asp22, Glu23, and Asp110.

Belongs to the RNase HII family. Requires Mn(2+) as cofactor. Mg(2+) serves as cofactor.

It is found in the cytoplasm. The catalysed reaction is Endonucleolytic cleavage to 5'-phosphomonoester.. In terms of biological role, endonuclease that specifically degrades the RNA of RNA-DNA hybrids. This Campylobacter jejuni subsp. doylei (strain ATCC BAA-1458 / RM4099 / 269.97) protein is Ribonuclease HII.